A 468-amino-acid polypeptide reads, in one-letter code: Alcohol dehydrogenase (quinone), cytochrome c subunit (468 aa).

A signal peptide spans 1–23 (MINRLKVTFSAAAFSLLAGTALA). Cytochrome c domains are found at residues 31–134 (ALVQ…MHGV), 178–293 (PEIA…KSLP), and 317–407 (TASV…RTSW). 9 residues coordinate heme c: C45, C48, H49, C193, C196, H197, C330, C333, and H334.

In terms of assembly, the alcohol dehydrogenase multicomponent enzyme system is composed of a dehydrogenase subunit I (AdhA) and a cytochrome c subunit II (AdhB). Heme c is required as a cofactor.

The protein localises to the cell membrane. The catalysed reaction is ethanol + a ubiquinone = a ubiquinol + acetaldehyde. In terms of biological role, cytochrome c component of the alcohol dehydrogenase multicomponent enzyme system which is involved in the production of acetic acid and in the ethanol oxidase respiratory chain. Quinohemoprotein alcohol dehydrogenase (ADH) catalyzes the oxidation of ethanol to acetaldehyde by transferring electrons to the ubiquinone embedded in the membrane phospholipids. The electrons transfer from ethanol to membranous ubiquinone occurs from pyrroloquinoline quinone (PQQ) to one heme c in subunit I (AdhA), and finally to two heme c in subunit II (AdhB). Besides ubiquinone reduction, ADH also has a ubiquinol (QH2) oxidation reaction which mediates electron transfer from ubiquinol to the non-energy generating bypass oxidase system. The electrons transfer occurs from ubiquinol (QH2) to the additional heme c within subunit II (AdhB). The chain is Alcohol dehydrogenase (quinone), cytochrome c subunit from Gluconacetobacter polyoxogenes (Acetobacter polyoxogenes).